Reading from the N-terminus, the 922-residue chain is Coronin-7 (922 aa).

WD repeat units lie at residues Cys75–Pro115, Pro124–Glu163, Ala166–Gln205, and Ala209–Ala253. Residues Asn386 to Ser462 are disordered. The segment covering Ser423–Ser456 has biased composition (low complexity). A phosphoserine mark is found at Ser459 and Ser462. Lys469 participates in a covalent cross-link: Glycyl lysine isopeptide (Lys-Gly) (interchain with G-Cter in ubiquitin). 4 WD repeats span residues Gln539–Val579, Gly589–Arg629, Gly632–Gln671, and Asp725–Leu765. The interval Leu854–Asp922 is disordered. Residue Thr874 is modified to Phosphothreonine. The span at Leu881–Leu893 shows a compositional bias: basic and acidic residues. Ser912 is modified (phosphoserine).

Belongs to the WD repeat coronin family. As to quaternary structure, interacts with clathrin adapter AP1 complex. This interaction takes place at Golgi membranes and not AP1-positive endosomal membranes. Interacts (when ubiquitinated at Lys-469) with EPS15. In terms of processing, the membrane-associated form is phosphorylated on tyrosine residues. Ubiquitinated via 'Lys-33'-linked ubiquitin chains by the BCR(KLHL20) E3 ubiquitin ligase complex: 'Lys-33'-linked ubiquitination promotes interaction with EPS15 and facilitates actin polymerization at the trans-Golgi network, thereby facilitating post-Golgi trafficking. Deubiquitinated by ZRANB1/TRABID.

The protein localises to the golgi apparatus membrane. The protein resides in the golgi apparatus. It localises to the trans-Golgi network. It is found in the cytoplasmic vesicle. Its subcellular location is the cytoplasm. The protein localises to the cytosol. F-actin regulator involved in anterograde Golgi to endosome transport: upon ubiquitination via 'Lys-33'-linked ubiquitin chains by the BCR(KLHL20) E3 ubiquitin ligase complex, interacts with EPS15 and localizes to the trans-Golgi network, where it promotes actin polymerization, thereby facilitating post-Golgi trafficking. May play a role in the maintenance of the Golgi apparatus morphology. This Rattus norvegicus (Rat) protein is Coronin-7 (Coro7).